The primary structure comprises 366 residues: MQFSISRENLLKPLQQVCGVLSNRPNIPVLNNVLLQIEDYRLTITGTDLEVELSSQTQLSSSSENGTFTIPAKKFLDICRTLSDDSEITVTFEQDRALVQSGRSRFTLATQPAEEYPNLTDWQSEVDFELPQNTLRRLIEATQFSMANQDARYFLNGMKFETEGNLLRTVATDGHRLAVCTISLEQELQNHSVILPRKGVLELVRLLETNDEPARLQIGTNNLRVHLKNTVFTSKLIDGRFPDYRRVLPRNATKIVEGNWEMLKQAFARASILSNERARSVRLSLKENQLKITASNTEHEEAEEIVDVNYNGEELEVGFNVTYILDVLNALKCNQVRMCLTDAFSSCLIENCEDSSCEYVIMPMRL.

It belongs to the beta sliding clamp family. In terms of assembly, forms a ring-shaped head-to-tail homodimer around DNA which binds and tethers DNA polymerases and other proteins to the DNA. The DNA replisome complex has a single clamp-loading complex (3 tau and 1 each of delta, delta', psi and chi subunits) which binds 3 Pol III cores (1 core on the leading strand and 2 on the lagging strand) each with a beta sliding clamp dimer. Additional proteins in the replisome are other copies of gamma, psi and chi, Ssb, DNA helicase and RNA primase.

The protein localises to the cytoplasm. Functionally, confers DNA tethering and processivity to DNA polymerases and other proteins. Acts as a clamp, forming a ring around DNA (a reaction catalyzed by the clamp-loading complex) which diffuses in an ATP-independent manner freely and bidirectionally along dsDNA. Initially characterized for its ability to contact the catalytic subunit of DNA polymerase III (Pol III), a complex, multichain enzyme responsible for most of the replicative synthesis in bacteria; Pol III exhibits 3'-5' exonuclease proofreading activity. The beta chain is required for initiation of replication as well as for processivity of DNA replication. The polypeptide is Beta sliding clamp (dnaN) (Haemophilus influenzae (strain ATCC 51907 / DSM 11121 / KW20 / Rd)).